We begin with the raw amino-acid sequence, 458 residues long: Glutamyl-tRNA(Gln) amidotransferase subunit D (458 aa).

Residues 97 to 434 enclose the Asparaginase/glutaminase domain; that stretch reads PNVSVMSTGG…KEVERLMRTN (338 aa). Active-site residues include threonine 107, threonine 185, aspartate 186, and lysine 264.

Belongs to the asparaginase 1 family. GatD subfamily. Heterodimer of GatD and GatE.

The catalysed reaction is L-glutamyl-tRNA(Gln) + L-glutamine + ATP + H2O = L-glutaminyl-tRNA(Gln) + L-glutamate + ADP + phosphate + H(+). Functionally, allows the formation of correctly charged Gln-tRNA(Gln) through the transamidation of misacylated Glu-tRNA(Gln) in organisms which lack glutaminyl-tRNA synthetase. The reaction takes place in the presence of glutamine and ATP through an activated gamma-phospho-Glu-tRNA(Gln). The GatDE system is specific for glutamate and does not act on aspartate. This chain is Glutamyl-tRNA(Gln) amidotransferase subunit D, found in Methanopyrus kandleri (strain AV19 / DSM 6324 / JCM 9639 / NBRC 100938).